We begin with the raw amino-acid sequence, 1084 residues long: TNF receptor-associated factor family protein DDB_G0272098 (1084 aa).

The region spanning 19–103 (YYCPDCGELL…KNRYYETKNF (85 aa)) is the LIM zinc-binding domain. 2 consecutive TRAF-type zinc fingers follow at residues 122–190 (KHIK…IDHE) and 191–248 (IHLS…YNMS). Positions 265–321 (IEEQNQDIKELHNFIENHLSKKFIDLDTIVNIQKYLIKNKNQKISQLTEIIKRVDNS) form a coiled coil. 4 disordered regions span residues 348 to 392 (YKNS…NINE), 490 to 523 (IRQQ…NTTI), 537 to 656 (NNNI…KDGL), and 709 to 897 (SIVE…NDDD). 4 stretches are compositionally biased toward low complexity: residues 349–375 (KNSN…TNEN), 492–509 (QQQQ…QQQQ), 537–549 (NNNI…NNNK), and 556–570 (ITAA…TTST). The stretch at 489–553 (LIRQQQQQQQ…NNNNNKNNDD (65 aa)) forms a coiled coil. Residues 571 to 586 (HTILNGTNNEASMTDI) show a composition bias toward polar residues. Residues 587 to 637 (NETTSTTTTAETTEATASESTEESNNTAETTTTTTTTTTTITTAAETVNST) show a composition bias toward low complexity. Basic and acidic residues predominate over residues 644-656 (TSEKVEEKGKDGL). Residues 735 to 852 (NGNENENENE…NNNNNNNENV (118 aa)) are a coiled coil. Acidic residues predominate over residues 739–757 (NENENENENENENENENEN). The segment covering 774 to 785 (SNINTSNDTEPT) has biased composition (polar residues). The segment covering 790–799 (EDIKKNKENE) has biased composition (basic and acidic residues). Residues 809-849 (NNNIKSVEDTNNNNNNNNNNNNNNNNNNNNNNNNNNNNNNN) are compositionally biased toward low complexity. Basic and acidic residues-rich tracts occupy residues 853–864 (YDIKKDRNRENV) and 875–892 (ENGK…SEDK). Positions 909–1042 (IFRNQILFKD…DNCFIVNLEV (134 aa)) constitute an MATH domain. The interval 1056–1084 (LLQKSSPPAATTTTTTSSSSSKTTPKTKR) is disordered. The segment covering 1059-1084 (KSSPPAATTTTTTSSSSSKTTPKTKR) has biased composition (low complexity).

This sequence belongs to the TNF receptor-associated factor family.

It localises to the cytoplasm. Probable adapter protein and signal transducer that links members of the tumor necrosis factor receptor family to different signaling pathways by association with the receptor cytoplasmic domain and kinases. The polypeptide is TNF receptor-associated factor family protein DDB_G0272098 (Dictyostelium discoideum (Social amoeba)).